Reading from the N-terminus, the 358-residue chain is MSVAPLKNDVFLRALLREPVPYTPIWLMRQAGRYLPEYNATRARAGSFMGLAQNPDYACEVTLQPLARYPLDAAILFSDILTVPHAMGLGLDFAPGEGPRFAHPVRDESDVAKLAVPDMDSLRYVFDAVRTIRRELDGRVPLIGFAGSPWTIACYMVEGRGSDDYRLIKSMLYGRPDLLHRILEINAEATRHYLNAQIDAGAQAVMLFDSWGGVLADGLFQQFSLAYTRRVVEGLTREREGRRVPVIVFTKGGGQWLEEIAACGCDAVGLDWTVNLGTARRRVADAVALQGNLDPMTLFGGAQAVRAEARRTLDAFGPVGKGGHVFNLGHGISQYSPPEVVSELVDEVHTYSRALHAG.

Substrate contacts are provided by residues 29–33 (RQAGR), phenylalanine 48, aspartate 79, tyrosine 155, serine 210, and histidine 330.

It belongs to the uroporphyrinogen decarboxylase family. Homodimer.

The protein localises to the cytoplasm. It carries out the reaction uroporphyrinogen III + 4 H(+) = coproporphyrinogen III + 4 CO2. Its pathway is porphyrin-containing compound metabolism; protoporphyrin-IX biosynthesis; coproporphyrinogen-III from 5-aminolevulinate: step 4/4. Catalyzes the decarboxylation of four acetate groups of uroporphyrinogen-III to yield coproporphyrinogen-III. This Bordetella bronchiseptica (strain ATCC BAA-588 / NCTC 13252 / RB50) (Alcaligenes bronchisepticus) protein is Uroporphyrinogen decarboxylase.